Reading from the N-terminus, the 749-residue chain is 5-methyltetrahydropteroyltriglutamate--homocysteine methyltransferase (749 aa).

5-methyltetrahydropteroyltri-L-glutamate is bound by residues 15–18 and Lys114; that span reads RELK. L-homocysteine contacts are provided by residues 425–427 and Glu478; that span reads IGS. L-methionine is bound by residues 425 to 427 and Glu478; that span reads IGS. Trp555 contacts 5-methyltetrahydropteroyltri-L-glutamate. Asp593 provides a ligand contact to L-homocysteine. Asp593 is an L-methionine binding site. Glu599 lines the 5-methyltetrahydropteroyltri-L-glutamate pocket. The Zn(2+) site is built by His636, Cys638, and Glu660. The active-site Proton donor is His689. Cys721 contributes to the Zn(2+) binding site.

This sequence belongs to the vitamin-B12 independent methionine synthase family. Requires Zn(2+) as cofactor.

It carries out the reaction 5-methyltetrahydropteroyltri-L-glutamate + L-homocysteine = tetrahydropteroyltri-L-glutamate + L-methionine. It participates in amino-acid biosynthesis; L-methionine biosynthesis via de novo pathway; L-methionine from L-homocysteine (MetE route): step 1/1. Functionally, catalyzes the transfer of a methyl group from 5-methyltetrahydrofolate to homocysteine resulting in methionine formation. In Streptococcus pneumoniae serotype 4 (strain ATCC BAA-334 / TIGR4), this protein is 5-methyltetrahydropteroyltriglutamate--homocysteine methyltransferase.